A 140-amino-acid polypeptide reads, in one-letter code: uncharacterized protein (140 aa).

The C2H2-type zinc finger occupies 21–42 (CPYCNYTNADVKAIKKHIKSKH).

It to M.jannaschii MJECL27.

This is an uncharacterized protein from Methanocaldococcus jannaschii (strain ATCC 43067 / DSM 2661 / JAL-1 / JCM 10045 / NBRC 100440) (Methanococcus jannaschii).